Here is a 216-residue protein sequence, read N- to C-terminus: Probable RNA 2'-phosphotransferase 2 (216 aa).

This sequence belongs to the KptA/TPT1 family.

In terms of biological role, removes the 2'-phosphate from RNA via an intermediate in which the phosphate is ADP-ribosylated by NAD followed by a presumed transesterification to release the RNA and generate ADP-ribose 1''-2''-cyclic phosphate (APPR&gt;P). May function as an ADP-ribosylase. The protein is Probable RNA 2'-phosphotransferase 2 (kptA2) of Archaeoglobus fulgidus (strain ATCC 49558 / DSM 4304 / JCM 9628 / NBRC 100126 / VC-16).